Consider the following 264-residue polypeptide: Thiazole synthase (264 aa).

K106 serves as the catalytic Schiff-base intermediate with DXP. Residues G167, 193 to 194, and 215 to 216 contribute to the 1-deoxy-D-xylulose 5-phosphate site; these read AG and NT.

It belongs to the ThiG family. As to quaternary structure, homotetramer. Forms heterodimers with either ThiH or ThiS.

The protein resides in the cytoplasm. It catalyses the reaction [ThiS sulfur-carrier protein]-C-terminal-Gly-aminoethanethioate + 2-iminoacetate + 1-deoxy-D-xylulose 5-phosphate = [ThiS sulfur-carrier protein]-C-terminal Gly-Gly + 2-[(2R,5Z)-2-carboxy-4-methylthiazol-5(2H)-ylidene]ethyl phosphate + 2 H2O + H(+). Its pathway is cofactor biosynthesis; thiamine diphosphate biosynthesis. Its function is as follows. Catalyzes the rearrangement of 1-deoxy-D-xylulose 5-phosphate (DXP) to produce the thiazole phosphate moiety of thiamine. Sulfur is provided by the thiocarboxylate moiety of the carrier protein ThiS. In vitro, sulfur can be provided by H(2)S. In Xylella fastidiosa (strain 9a5c), this protein is Thiazole synthase.